Consider the following 531-residue polypeptide: 4-hydroxyphenylacetaldehyde oxime monooxygenase (531 aa).

A helical membrane pass occupies residues 18–38 (WQTCLLVLLPVLLVSYYLLTS). Heme b contacts are provided by Arg122, Arg151, Arg466, and Cys468.

Belongs to the cytochrome P450 family. Heme b serves as cofactor.

The protein resides in the endoplasmic reticulum membrane. It catalyses the reaction (E)-4-hydroxyphenylacetaldehyde oxime + reduced [NADPH--hemoprotein reductase] + O2 = (S)-4-hydroxymandelonitrile + oxidized [NADPH--hemoprotein reductase] + 2 H2O + H(+). The enzyme catalyses (E)-4-hydroxyphenylacetaldehyde oxime = (Z)-(4-hydroxyphenyl)acetaldehyde oxime. It carries out the reaction (Z)-(4-hydroxyphenyl)acetaldehyde oxime = 4-hydroxyphenylacetonitrile + H2O. The catalysed reaction is 4-hydroxyphenylacetonitrile + reduced [NADPH--hemoprotein reductase] + O2 = (S)-4-hydroxymandelonitrile + oxidized [NADPH--hemoprotein reductase] + H2O + H(+). It participates in secondary metabolite biosynthesis; dhurrin biosynthesis; dhurrin from L-tyrosine: step 2/3. Cytochrome P450 involved in the biosynthesis of the cyanogenic glucoside dhurrin. Catalyzes the conversion of p-hydroxyphenylacetaldoxime to p-hydroxymandelonitrile via three different and successive activities: isomerization of the (E) isomer to the (Z) isomer of p-hydroxyphenylacetaldoxime, followed by dehydration of the oxime to the corresponding nitrile, and C-hydroxylation of the nitrile to produce p-hydroxymandelonitrile. This Sorghum bicolor (Sorghum) protein is 4-hydroxyphenylacetaldehyde oxime monooxygenase.